The following is a 64-amino-acid chain: Relaxin (64 aa).

Disulfide bonds link C11–C51, C23–C64, and C50–C55.

Belongs to the insulin family. Heterodimer of a B chain and an A chain linked by two disulfide bonds.

The protein resides in the secreted. The sequence is that of Relaxin from Leucoraja erinaceus (Little skate).